The chain runs to 104 residues: Circadian clock oscillator protein KaiB (104 aa).

It belongs to the KaiB family. As to quaternary structure, the KaiABC complex composition changes during the circadian cycle to control KaiC phosphorylation. Complexes KaiC(6), KaiA(2-4):KaiC(6), KaiB(6):KaiC(6) and KaiC(6):KaiB(6):KaiA(12) are among the most important forms, many form cooperatively. Undergoes a major conformational rearrangment; in the free state forms homotetramers as a dimer of dimers. When bound to the CI domain of KaiC switches to a monomeric thioredoxin-fold (KaiB(fs)). KaiB(fs) binds CikA, leading it to dephosphorylate phospho-RpaA.

Functionally, key component of the KaiABC oscillator complex, which constitutes the main circadian regulator in cyanobacteria. Complex composition changes during the circadian cycle to control KaiC phosphorylation. KaiA stimulates KaiC autophosphorylation, while KaiB sequesters KaiA, leading to KaiC autodephosphorylation. Phospho-Ser-431 KaiC accumulation triggers binding of KaiB to form the KaiB(6):KaiC(6) complex, leading to changes in output regulators CikA and SasA. KaiB switches to a thioredoxin-like fold (KaiB(fs)) when bound to KaiC. KaiB(6):KaiC(6) formation exposes a site for KaiA binding that sequesters KaiA from KaiC, making the KaiC(6):KaiB(6):KaiA(12) complex that results in KaiC autodephosphorylation. A metamorphic protein which reversibly switches between an inactive tetrameric fold and a rare, thioredoxin-like monomeric fold (KaiB(fs)). KaiB(fs) binds phospho-KaiC, KaiA and CikA. KaiA and CikA compete for binding to KaiB(fs), and KaiB(fs) and SasA compete for binding to KaiC, thus the clock oscillator and output signal pathway are tightly coupled. In Microcystis aeruginosa (strain NIES-843 / IAM M-2473), this protein is Circadian clock oscillator protein KaiB.